The following is a 373-amino-acid chain: tRNA-specific 2-thiouridylase MnmA (373 aa).

ATP is bound by residues 12–19 (GMSGGVDS) and methionine 38. An interaction with target base in tRNA region spans residues 98-100 (NPD). The active-site Nucleophile is the cysteine 103. Cysteine 103 and cysteine 200 form a disulfide bridge. Glycine 127 contacts ATP. Positions 150–152 (KDQ) are interaction with tRNA. Catalysis depends on cysteine 200, which acts as the Cysteine persulfide intermediate. An interaction with tRNA region spans residues 312-313 (RY).

It belongs to the MnmA/TRMU family.

Its subcellular location is the cytoplasm. The enzyme catalyses S-sulfanyl-L-cysteinyl-[protein] + uridine(34) in tRNA + AH2 + ATP = 2-thiouridine(34) in tRNA + L-cysteinyl-[protein] + A + AMP + diphosphate + H(+). Its function is as follows. Catalyzes the 2-thiolation of uridine at the wobble position (U34) of tRNA, leading to the formation of s(2)U34. The chain is tRNA-specific 2-thiouridylase MnmA from Streptococcus pneumoniae (strain ATCC 700669 / Spain 23F-1).